Reading from the N-terminus, the 657-residue chain is Threonine--tRNA ligase (657 aa).

A TGS domain is found at 1-61 (MINVTLPDGS…EGDASVAIIT (61 aa)). Residues 244–549 (DHRKLGAQLD…LIENYAGSFP (306 aa)) are catalytic. Residues Cys-349, His-400, and His-526 each coordinate Zn(2+).

The protein belongs to the class-II aminoacyl-tRNA synthetase family. In terms of assembly, homodimer. Zn(2+) serves as cofactor.

Its subcellular location is the cytoplasm. The catalysed reaction is tRNA(Thr) + L-threonine + ATP = L-threonyl-tRNA(Thr) + AMP + diphosphate + H(+). In terms of biological role, catalyzes the attachment of threonine to tRNA(Thr) in a two-step reaction: L-threonine is first activated by ATP to form Thr-AMP and then transferred to the acceptor end of tRNA(Thr). Also edits incorrectly charged L-seryl-tRNA(Thr). The protein is Threonine--tRNA ligase of Hyphomonas neptunium (strain ATCC 15444).